A 342-amino-acid chain; its full sequence is S-adenosylmethionine:tRNA ribosyltransferase-isomerase (342 aa).

This sequence belongs to the QueA family. In terms of assembly, monomer.

It is found in the cytoplasm. The catalysed reaction is 7-aminomethyl-7-carbaguanosine(34) in tRNA + S-adenosyl-L-methionine = epoxyqueuosine(34) in tRNA + adenine + L-methionine + 2 H(+). Its pathway is tRNA modification; tRNA-queuosine biosynthesis. In terms of biological role, transfers and isomerizes the ribose moiety from AdoMet to the 7-aminomethyl group of 7-deazaguanine (preQ1-tRNA) to give epoxyqueuosine (oQ-tRNA). The protein is S-adenosylmethionine:tRNA ribosyltransferase-isomerase of Oceanobacillus iheyensis (strain DSM 14371 / CIP 107618 / JCM 11309 / KCTC 3954 / HTE831).